Reading from the N-terminus, the 533-residue chain is Tyrosinase (533 aa).

The first 18 residues, 1–18 (MFLAVLYCLLWSFQISDG), serve as a signal peptide directing secretion. Residues 19-476 (HFPRACASSK…YLEQASRIWP (458 aa)) lie on the Lumenal, melanosome side of the membrane. Asn86, Asn111, and Asn161 each carry an N-linked (GlcNAc...) asparagine glycan. 3 residues coordinate Cu cation: His180, His202, and His211. N-linked (GlcNAc...) asparagine glycosylation is found at Asn230 and Asn337. His363 and His367 together coordinate Cu cation. Asn371 carries N-linked (GlcNAc...) asparagine glycosylation. His390 lines the Cu cation pocket. A helical membrane pass occupies residues 477 to 497 (WLLGAALVGAVIAAALSGLSS). The Cytoplasmic portion of the chain corresponds to 498 to 533 (RLCLQKKKKKKQPQEERQPLLMDKDDYHSLLYQSHL).

It belongs to the tyrosinase family. Forms an OPN3-dependent complex with DCT in response to blue light in melanocytes. Cu(2+) serves as cofactor. Post-translationally, glycosylated. Expressed in the skin.

Its subcellular location is the melanosome membrane. The protein resides in the melanosome. The catalysed reaction is 2 L-dopa + O2 = 2 L-dopaquinone + 2 H2O. It catalyses the reaction L-tyrosine + O2 = L-dopaquinone + H2O. The enzyme catalyses 2 5,6-dihydroxyindole-2-carboxylate + O2 = 2 indole-5,6-quinone-2-carboxylate + 2 H2O. This is a copper-containing oxidase that functions in the formation of pigments such as melanins and other polyphenolic compounds. Catalyzes the initial and rate limiting step in the cascade of reactions leading to melanin production from tyrosine. In addition to hydroxylating tyrosine to DOPA (3,4-dihydroxyphenylalanine), also catalyzes the oxidation of DOPA to DOPA-quinone, and possibly the oxidation of DHI (5,6-dihydroxyindole) to indole-5,6 quinone. In Mus musculus (Mouse), this protein is Tyrosinase (Tyr).